A 387-amino-acid polypeptide reads, in one-letter code: 3-ketoacyl-CoA thiolase (387 aa).

Cys91 acts as the Acyl-thioester intermediate in catalysis. Residues His343 and Cys373 each act as proton acceptor in the active site.

This sequence belongs to the thiolase-like superfamily. Thiolase family. Heterotetramer of two alpha chains (FadB) and two beta chains (FadA).

It is found in the cytoplasm. The enzyme catalyses an acyl-CoA + acetyl-CoA = a 3-oxoacyl-CoA + CoA. It participates in lipid metabolism; fatty acid beta-oxidation. Catalyzes the final step of fatty acid oxidation in which acetyl-CoA is released and the CoA ester of a fatty acid two carbons shorter is formed. This chain is 3-ketoacyl-CoA thiolase, found in Enterobacter sp. (strain 638).